Consider the following 127-residue polypeptide: Small ribosomal subunit protein uS12 (127 aa).

Residues 8 to 28 (IRTEREKARQKTKSPALKQCP) are disordered. Position 89 is a 3-methylthioaspartic acid (Asp-89). A disordered region spans residues 102-127 (LDTAGVKDRKQGRSKYGTKRPKEAKK). Residues 113-127 (GRSKYGTKRPKEAKK) are compositionally biased toward basic residues.

This sequence belongs to the universal ribosomal protein uS12 family. In terms of assembly, part of the 30S ribosomal subunit. Contacts proteins S8 and S17. May interact with IF1 in the 30S initiation complex.

Functionally, with S4 and S5 plays an important role in translational accuracy. In terms of biological role, interacts with and stabilizes bases of the 16S rRNA that are involved in tRNA selection in the A site and with the mRNA backbone. Located at the interface of the 30S and 50S subunits, it traverses the body of the 30S subunit contacting proteins on the other side and probably holding the rRNA structure together. The combined cluster of proteins S8, S12 and S17 appears to hold together the shoulder and platform of the 30S subunit. The polypeptide is Small ribosomal subunit protein uS12 (Nostoc sp. (strain PCC 7120 / SAG 25.82 / UTEX 2576)).